A 353-amino-acid chain; its full sequence is Photosystem II protein D1 (353 aa).

Thr2 carries the N-acetylthreonine modification. At Thr2 the chain carries Phosphothreonine. The next 3 membrane-spanning stretches (helical) occupy residues 29 to 46 (YIGW…TATS), 118 to 133 (HFLL…EWEL), and 142 to 156 (WIAV…AATA). His118 is a chlorophyll a binding site. Tyr126 contributes to the pheophytin a binding site. 2 residues coordinate [CaMn4O5] cluster: Asp170 and Glu189. Residues 197 to 218 (FHMLGVAGVFGGSLFSAMHGSL) traverse the membrane as a helical segment. Chlorophyll a is bound at residue His198. A quinone is bound by residues His215 and 264–265 (SF). His215 contributes to the Fe cation binding site. Residue His272 participates in Fe cation binding. The chain crosses the membrane as a helical span at residues 274-288 (FLAAWPVVGIWFTAL). Residues His332, Glu333, Asp342, and Ala344 each coordinate [CaMn4O5] cluster. The propeptide occupies 345 to 353 (AVEAPSTIG).

The protein belongs to the reaction center PufL/M/PsbA/D family. In terms of assembly, PSII is composed of 1 copy each of membrane proteins PsbA, PsbB, PsbC, PsbD, PsbE, PsbF, PsbH, PsbI, PsbJ, PsbK, PsbL, PsbM, PsbT, PsbX, PsbY, PsbZ, Psb30/Ycf12, at least 3 peripheral proteins of the oxygen-evolving complex and a large number of cofactors. It forms dimeric complexes. The cofactor is The D1/D2 heterodimer binds P680, chlorophylls that are the primary electron donor of PSII, and subsequent electron acceptors. It shares a non-heme iron and each subunit binds pheophytin, quinone, additional chlorophylls, carotenoids and lipids. D1 provides most of the ligands for the Mn4-Ca-O5 cluster of the oxygen-evolving complex (OEC). There is also a Cl(-1) ion associated with D1 and D2, which is required for oxygen evolution. The PSII complex binds additional chlorophylls, carotenoids and specific lipids.. In terms of processing, tyr-161 forms a radical intermediate that is referred to as redox-active TyrZ, YZ or Y-Z. Post-translationally, C-terminally processed by CTPA; processing is essential to allow assembly of the oxygen-evolving complex and thus photosynthetic growth.

Its subcellular location is the plastid. The protein localises to the chloroplast thylakoid membrane. The catalysed reaction is 2 a plastoquinone + 4 hnu + 2 H2O = 2 a plastoquinol + O2. Photosystem II (PSII) is a light-driven water:plastoquinone oxidoreductase that uses light energy to abstract electrons from H(2)O, generating O(2) and a proton gradient subsequently used for ATP formation. It consists of a core antenna complex that captures photons, and an electron transfer chain that converts photonic excitation into a charge separation. The D1/D2 (PsbA/PsbD) reaction center heterodimer binds P680, the primary electron donor of PSII as well as several subsequent electron acceptors. The polypeptide is Photosystem II protein D1 (Lemna minor (Common duckweed)).